Consider the following 201-residue polypeptide: 3-isopropylmalate dehydratase small subunit (201 aa).

The protein belongs to the LeuD family. LeuD type 1 subfamily. As to quaternary structure, heterodimer of LeuC and LeuD.

It carries out the reaction (2R,3S)-3-isopropylmalate = (2S)-2-isopropylmalate. It functions in the pathway amino-acid biosynthesis; L-leucine biosynthesis; L-leucine from 3-methyl-2-oxobutanoate: step 2/4. Functionally, catalyzes the isomerization between 2-isopropylmalate and 3-isopropylmalate, via the formation of 2-isopropylmaleate. This chain is 3-isopropylmalate dehydratase small subunit, found in Methylorubrum extorquens (strain ATCC 14718 / DSM 1338 / JCM 2805 / NCIMB 9133 / AM1) (Methylobacterium extorquens).